The sequence spans 488 residues: V-type proton ATPase subunit B 1 (488 aa).

This sequence belongs to the ATPase alpha/beta chains family. As to quaternary structure, V-ATPase is a heteromultimeric enzyme composed of a peripheral catalytic V1 complex (main components: subunits A, B, C, D, E, and F) attached to an integral membrane V0 proton pore complex (main component: the proteolipid protein).

Non-catalytic subunit of the peripheral V1 complex of vacuolar ATPase. V-ATPase is responsible for acidifying a variety of intracellular compartments in eukaryotic cells. The sequence is that of V-type proton ATPase subunit B 1 from Hordeum vulgare (Barley).